Reading from the N-terminus, the 636-residue chain is DNA mismatch repair protein MutL (636 aa).

Basic and acidic residues predominate over residues 332–344; it reads HAGEQGDSLRTDI. Disordered stretches follow at residues 332 to 360 and 417 to 443; these read HAGEQGDSLRTDIADAPEQPGATATPADN and ASAPADAAPAQASEPAAAPQADDSDDA. Low complexity predominate over residues 417–437; sequence ASAPADAAPAQASEPAAAPQA.

The protein belongs to the DNA mismatch repair MutL/HexB family.

Functionally, this protein is involved in the repair of mismatches in DNA. It is required for dam-dependent methyl-directed DNA mismatch repair. May act as a 'molecular matchmaker', a protein that promotes the formation of a stable complex between two or more DNA-binding proteins in an ATP-dependent manner without itself being part of a final effector complex. This chain is DNA mismatch repair protein MutL, found in Ralstonia nicotianae (strain ATCC BAA-1114 / GMI1000) (Ralstonia solanacearum).